The sequence spans 140 residues: MTEYQASERRGCRIMGISRSLLHYCPNTARDIPVVEVLQKLAHQYPAYGFGLMFNKLRQSGLPWNVKRVYRVYRLLKLNFRRKGKKRLPNRHPQPLAIPLKMNHCWSVDFMSDALPDGRRFRLFNVVEILTGKHWQLKLT.

In Yersinia pseudotuberculosis serotype I (strain IP32953), this protein is Low calcium response locus protein T (lcrT).